The primary structure comprises 621 residues: Cryptochrome-1 (621 aa).

The Photolyase/cryptochrome alpha/beta domain occupies 3–132; sequence VNAVHWFRKG…EVIVRISHTL (130 aa). 3 short sequence motifs (LIR) span residues 50-54, 82-87, and 151-156; these read NRWRF, DVFPRL, and KRFQTL. S252 is a binding site for FAD. 4 short sequence motifs (LIR) span residues 255–260, 271–276, 285–290, and 335–339; these read LRFGCL, DLYKKV, SLYGQL, and TGFPW. Residue Q289 participates in FAD binding. H355 is a binding site for FAD. Positions 379 to 384 match the LIR 8 motif; that stretch reads KVFEEL. 387-389 serves as a coordination point for FAD; sequence DAD. 5 consecutive short sequence motifs (LIR) follow at residues 395-400, 411-416, 430-435, 486-491, and 492-497; these read GSWMWL, HCYCPV, RRYLPV, QIYQQL, and SRYRGL. The segment at 581–621 is disordered; sequence QSHLMQPGRASLGTGISAGKRPNPEEETQSVGPKVQRQSTN.

It belongs to the DNA photolyase class-1 family. Component of the circadian core oscillator, which includes the CRY proteins, CLOCK or NPAS2, BMAL1 or BMAL2, CSNK1E, and the PER proteins. FAD is required as a cofactor. It depends on (6R)-5,10-methylene-5,6,7,8-tetrahydrofolate as a cofactor. In terms of tissue distribution, expressed in the pineal gland.

It localises to the cytoplasm. The protein localises to the nucleus. Transcriptional repressor which forms a core component of the circadian clock. The circadian clock, an internal time-keeping system, regulates various physiological processes through the generation of approximately 24 hour circadian rhythms in gene expression, which are translated into rhythms in metabolism and behavior. It is derived from the Latin roots 'circa' (about) and 'diem' (day) and acts as an important regulator of a wide array of physiological functions including metabolism, sleep, body temperature, blood pressure, endocrine, immune, cardiovascular, and renal function. Consists of two major components: the central clock, residing in the suprachiasmatic nucleus (SCN) of the brain, and the peripheral clocks that are present in nearly every tissue and organ system. Both the central and peripheral clocks can be reset by environmental cues, also known as Zeitgebers (German for 'timegivers'). The predominant Zeitgeber for the central clock is light, which is sensed by retina and signals directly to the SCN. The central clock entrains the peripheral clocks through neuronal and hormonal signals, body temperature and feeding-related cues, aligning all clocks with the external light/dark cycle. Circadian rhythms allow an organism to achieve temporal homeostasis with its environment at the molecular level by regulating gene expression to create a peak of protein expression once every 24 hours to control when a particular physiological process is most active with respect to the solar day. Transcription and translation of core clock components (CLOCK, NPAS2, BMAL1, BMAL2, PER1, PER2, PER3, CRY1 and CRY2) plays a critical role in rhythm generation, whereas delays imposed by post-translational modifications (PTMs) are important for determining the period (tau) of the rhythms (tau refers to the period of a rhythm and is the length, in time, of one complete cycle). A diurnal rhythm is synchronized with the day/night cycle, while the ultradian and infradian rhythms have a period shorter and longer than 24 hours, respectively. Disruptions in the circadian rhythms contribute to the pathology of cardiovascular diseases, cancer, metabolic syndromes and aging. A transcription/translation feedback loop (TTFL) forms the core of the molecular circadian clock mechanism. Transcription factors, CLOCK or NPAS2 and BMAL1 or BMAL2, form the positive limb of the feedback loop, act in the form of a heterodimer and activate the transcription of core clock genes and clock-controlled genes (involved in key metabolic processes), harboring E-box elements (5'-CACGTG-3') within their promoters. The core clock genes: PER1/2/3 and CRY1/2 which are transcriptional repressors form the negative limb of the feedback loop and interact with the CLOCK|NPAS2-BMAL1|BMAL2 heterodimer inhibiting its activity and thereby negatively regulating their own expression. This heterodimer also activates nuclear receptors NR1D1/2 and RORA/B/G, which form a second feedback loop and which activate and repress BMAL1 transcription, respectively. CRY1 and CRY2 have redundant functions but also differential and selective contributions at least in defining the pace of the SCN circadian clock and its circadian transcriptional outputs. More potent transcriptional repressor in cerebellum and liver than CRY2, though more effective in lengthening the period of the SCN oscillator. On its side, CRY2 seems to play a critical role in tuning SCN circadian period by opposing the action of CRY1. With CRY2, is dispensable for circadian rhythm generation but necessary for the development of intercellular networks for rhythm synchrony. Capable of translocating circadian clock core proteins such as PER proteins to the nucleus. Interacts with CLOCK-BMAL1 independently of PER proteins and is found at CLOCK-BMAL1-bound sites, suggesting that CRY may act as a molecular gatekeeper to maintain CLOCK-BMAL1 in a poised and repressed state until the proper time for transcriptional activation. Represses CLOCK-BMAL1-mediated transcriptional activation. This Gallus gallus (Chicken) protein is Cryptochrome-1 (CRY1).